Here is a 279-residue protein sequence, read N- to C-terminus: Biotin synthase (279 aa).

The Radical SAM core domain occupies 2-228 (KTIMLCAICS…ETRVMIAGGR (227 aa)). Residues C17, C21, and C24 each coordinate [4Fe-4S] cluster. Residues C61, C96, C154, and R221 each coordinate [2Fe-2S] cluster.

This sequence belongs to the radical SAM superfamily. Biotin synthase family. Homodimer. It depends on [4Fe-4S] cluster as a cofactor. [2Fe-2S] cluster is required as a cofactor.

The enzyme catalyses (4R,5S)-dethiobiotin + (sulfur carrier)-SH + 2 reduced [2Fe-2S]-[ferredoxin] + 2 S-adenosyl-L-methionine = (sulfur carrier)-H + biotin + 2 5'-deoxyadenosine + 2 L-methionine + 2 oxidized [2Fe-2S]-[ferredoxin]. It functions in the pathway cofactor biosynthesis; biotin biosynthesis; biotin from 7,8-diaminononanoate: step 2/2. Its function is as follows. Catalyzes the conversion of dethiobiotin (DTB) to biotin by the insertion of a sulfur atom into dethiobiotin via a radical-based mechanism. In Campylobacter concisus (strain 13826), this protein is Biotin synthase.